We begin with the raw amino-acid sequence, 238 residues long: Uridylate kinase (238 aa).

Residue 12 to 15 (KLSG) coordinates ATP. G54 contributes to the UMP binding site. Positions 55 and 59 each coordinate ATP. Residues D74 and 135-142 (TGNPYFTT) each bind UMP. Residues T162, Y168, and D171 each coordinate ATP.

This sequence belongs to the UMP kinase family. In terms of assembly, homohexamer.

The protein resides in the cytoplasm. The catalysed reaction is UMP + ATP = UDP + ADP. The protein operates within pyrimidine metabolism; CTP biosynthesis via de novo pathway; UDP from UMP (UMPK route): step 1/1. Its activity is regulated as follows. Inhibited by UTP. Catalyzes the reversible phosphorylation of UMP to UDP. The polypeptide is Uridylate kinase (Lawsonia intracellularis (strain PHE/MN1-00)).